The chain runs to 132 residues: Glycine cleavage system H protein (132 aa).

In terms of domain architecture, Lipoyl-binding spans 24 to 106 (RVRVGITDYA…YGAGWLFELE (83 aa)). Lys-65 is subject to N6-lipoyllysine.

Belongs to the GcvH family. In terms of assembly, the glycine cleavage system is composed of four proteins: P, T, L and H. Requires (R)-lipoate as cofactor.

The glycine cleavage system catalyzes the degradation of glycine. The H protein shuttles the methylamine group of glycine from the P protein to the T protein. The polypeptide is Glycine cleavage system H protein (Nocardia farcinica (strain IFM 10152)).